The chain runs to 378 residues: Decaprenyl-diphosphate synthase subunit 1 (378 aa).

Residues K72, R75, and H130 each contribute to the isopentenyl diphosphate site. The Mg(2+) site is built by D137 and D141. R147 lines the isopentenyl diphosphate pocket.

Belongs to the FPP/GGPP synthase family. As to quaternary structure, heterotetramer of 2 dps1 and 2 dlp1 subunits. Mg(2+) serves as cofactor.

The protein localises to the mitochondrion. The enzyme catalyses 7 isopentenyl diphosphate + (2E,6E)-farnesyl diphosphate = all-trans-decaprenyl diphosphate + 7 diphosphate. The protein operates within cofactor biosynthesis; ubiquinone biosynthesis. Functionally, supplies decaprenyl diphosphate, the precursor for the side chain of the isoprenoid quinones ubiquinone-10. In Schizosaccharomyces pombe (strain 972 / ATCC 24843) (Fission yeast), this protein is Decaprenyl-diphosphate synthase subunit 1 (dps1).